We begin with the raw amino-acid sequence, 313 residues long: MSFPTVFIDGDQGTTGLQIHARLRDRTDVRLLTLPAAERKEAARRADALNACDIAILCLPDAAAREAVGFIRNPAVRVIDASSAHRTQPDWVYGFPEMADGHAHEIAHAKRVTNPGCYPTGAIGLLRPLLQAGLLPRDYPVSIHAVSGYSGGGRAAVDAFESGDAAARALPLQVYGLALAHKHVPEIRQHAGLAHRPFFVPAYGAYRQGIVLTIPIELRLLPAGVTGERLHACLAHHYADARHVDVMPLADARAATHLDPQALNGTNDLRLGVFVNANGGQVLLSAVFDNLGKGASGAAVQNLDLMLGARHAA.

C117 is a catalytic residue.

The protein belongs to the NAGSA dehydrogenase family. Type 2 subfamily.

Its subcellular location is the cytoplasm. The catalysed reaction is N-acetyl-L-glutamate 5-semialdehyde + phosphate + NADP(+) = N-acetyl-L-glutamyl 5-phosphate + NADPH + H(+). The protein operates within amino-acid biosynthesis; L-arginine biosynthesis; N(2)-acetyl-L-ornithine from L-glutamate: step 3/4. In terms of biological role, catalyzes the NADPH-dependent reduction of N-acetyl-5-glutamyl phosphate to yield N-acetyl-L-glutamate 5-semialdehyde. This Burkholderia cenocepacia (strain HI2424) protein is N-acetyl-gamma-glutamyl-phosphate reductase.